A 98-amino-acid polypeptide reads, in one-letter code: UPF0235 protein Mmc1_3654 (98 aa).

It belongs to the UPF0235 family.

The protein is UPF0235 protein Mmc1_3654 of Magnetococcus marinus (strain ATCC BAA-1437 / JCM 17883 / MC-1).